The chain runs to 418 residues: Putative ion-transport protein YfeO (418 aa).

12 consecutive transmembrane segments (helical) span residues 10 to 30, 54 to 74, 99 to 119, 120 to 140, 149 to 169, 186 to 206, 223 to 243, 258 to 278, 300 to 320, 322 to 342, 343 to 363, and 371 to 391; these read LLLS…LIVV, DSPF…GLVI, ALLG…SLGP, EHPI…RLLP, ILAS…AALI, LFAP…FFHP, ILSG…AVWC, VLVL…GGPV, DYFL…ASGF, GGRI…LHEH, VPAV…VLVV, and LFMA…CIVM.

Belongs to the chloride channel (TC 2.A.49) family.

The protein localises to the cell membrane. This is Putative ion-transport protein YfeO from Escherichia coli O17:K52:H18 (strain UMN026 / ExPEC).